We begin with the raw amino-acid sequence, 477 residues long: Membrane-bound lytic murein transglycosylase F (477 aa).

Residues 1–22 (MTRFLLIIILGFLLTACQQVTV) form the signal peptide. The non-LT domain stretch occupies residues 23 to 257 (DEPEFVPHQL…HLNEKYFGHV (235 aa)). The tract at residues 258 to 477 (KRFDYIDTRA…AGSLSPDQPK (220 aa)) is LT domain. The active site involves Glu302. The disordered stretch occupies residues 446-477 (SKQPMPEDEQNDLIAEELPSMPAGSLSPDQPK). Positions 451-460 (PEDEQNDLIA) are enriched in acidic residues.

The protein in the N-terminal section; belongs to the bacterial solute-binding protein 3 family. It in the C-terminal section; belongs to the transglycosylase Slt family.

Its subcellular location is the cell outer membrane. The catalysed reaction is Exolytic cleavage of the (1-&gt;4)-beta-glycosidic linkage between N-acetylmuramic acid (MurNAc) and N-acetylglucosamine (GlcNAc) residues in peptidoglycan, from either the reducing or the non-reducing ends of the peptidoglycan chains, with concomitant formation of a 1,6-anhydrobond in the MurNAc residue.. In terms of biological role, murein-degrading enzyme that degrades murein glycan strands and insoluble, high-molecular weight murein sacculi, with the concomitant formation of a 1,6-anhydromuramoyl product. Lytic transglycosylases (LTs) play an integral role in the metabolism of the peptidoglycan (PG) sacculus. Their lytic action creates space within the PG sacculus to allow for its expansion as well as for the insertion of various structures such as secretion systems and flagella. The chain is Membrane-bound lytic murein transglycosylase F from Shewanella sp. (strain W3-18-1).